Reading from the N-terminus, the 540-residue chain is Solute carrier family 22 member 7 (540 aa).

Helical transmembrane passes span L21–M41, V144–S164, L172–N192, L202–L222, V232–I252, W257–P277, V344–L364, L378–V398, L402–S422, I429–L449, T462–L484, and W488–L510.

The protein belongs to the major facilitator (TC 2.A.1) superfamily. Organic cation transporter (TC 2.A.1.19) family. Abundant expression in male and female kidney. In kidney, expressed at the brush border of the proximal tubule S3 segment (S3) in the outer stripe and medullary rays. In kidney, expression is higher in female than male. Also expressed in female liver.

The protein localises to the basolateral cell membrane. Its subcellular location is the apical cell membrane. It localises to the cell membrane. It catalyses the reaction orotate(out) + L-glutamate(in) = orotate(in) + L-glutamate(out). The enzyme catalyses 3',5'-cyclic GMP(in) = 3',5'-cyclic GMP(out). The catalysed reaction is GMP(in) = GMP(out). It carries out the reaction 2'-deoxyguanosine(in) = 2'-deoxyguanosine(out). It catalyses the reaction GDP(in) = GDP(out). The enzyme catalyses guanosine(in) = guanosine(out). The catalysed reaction is GTP(in) = GTP(out). It carries out the reaction 3',5'-cyclic AMP(in) = 3',5'-cyclic AMP(out). It catalyses the reaction creatinine(in) = creatinine(out). The enzyme catalyses prostaglandin E2(out) = prostaglandin E2(in). The catalysed reaction is 2-oxoglutarate(in) = 2-oxoglutarate(out). It carries out the reaction glutarate(in) = glutarate(out). It catalyses the reaction urate(out) = urate(in). The enzyme catalyses estrone 3-sulfate(out) = estrone 3-sulfate(in). Its function is as follows. Functions as a Na(+)-independent bidirectional multispecific transporter. Contributes to the renal and hepatic elimination of endogenous organic compounds from the systemic circulation into the urine and bile, respectively. Capable of transporting a wide range of purine and pyrimidine nucleobases, nucleosides, and nucleotides with cGMP, 2'deoxyguanosine and GMP being the preferred substrates. Functions as a pH- and chloride-independent cGMP bidirectional facilitative transporter that can regulate both intracellular and extracellular levels of cGMP and may be involved in cGMP signaling pathways. Mediates orotate/glutamate bidirectional exchange and most likely display a physiological role in hepatic release of glutamate into the blood. Involved in renal secretion and possible reabsorption of creatinine. Able to uptake prostaglandin E2 (PGE2) and may contribute to PGE2 renal excretion. Also transports alpha-ketoglutarate and urate. Unlike human hortolog, able to transport glutarate. Apart from the orotate/glutamate exchange, the counterions for the uptake of other SLC22A7/OAT2 substrates remain to be identified. This chain is Solute carrier family 22 member 7, found in Mus musculus (Mouse).